Here is a 1084-residue protein sequence, read N- to C-terminus: Putative tRNA-specific 2-thiouridylase (1084 aa).

The next 3 membrane-spanning stretches (helical) occupy residues Met1–Thr21, Phe32–Ile52, and Ile309–Leu329. Catalysis depends on Cys538, which acts as the Nucleophile. Cys538 and Cys715 are disulfide-bonded. Residue Cys715 is the Cysteine persulfide intermediate of the active site.

It belongs to the MnmA/TRMU family.

It localises to the plastid. The protein resides in the apicoplast. The protein localises to the membrane. The enzyme catalyses S-sulfanyl-L-cysteinyl-[protein] + uridine(34) in tRNA + AH2 + ATP = 2-thiouridine(34) in tRNA + L-cysteinyl-[protein] + A + AMP + diphosphate + H(+). In terms of biological role, catalyzes the 2-thiolation of uridine at the wobble position (U34) of tRNA, leading to the formation of s(2)U34. Required for apicoplast maintenance. The sequence is that of Putative tRNA-specific 2-thiouridylase from Plasmodium falciparum (isolate 3D7).